Reading from the N-terminus, the 301-residue chain is Acetylglutamate kinase (301 aa).

Substrate-binding positions include 68 to 69 (GG), arginine 90, and asparagine 195.

The protein belongs to the acetylglutamate kinase family. ArgB subfamily.

The protein resides in the cytoplasm. The catalysed reaction is N-acetyl-L-glutamate + ATP = N-acetyl-L-glutamyl 5-phosphate + ADP. Its pathway is amino-acid biosynthesis; L-arginine biosynthesis; N(2)-acetyl-L-ornithine from L-glutamate: step 2/4. Functionally, catalyzes the ATP-dependent phosphorylation of N-acetyl-L-glutamate. The polypeptide is Acetylglutamate kinase (Pseudomonas savastanoi pv. phaseolicola (strain 1448A / Race 6) (Pseudomonas syringae pv. phaseolicola (strain 1448A / Race 6))).